Reading from the N-terminus, the 68-residue chain is Neuronal regeneration-related protein (68 aa).

Residues 22–54 (EGRLPKGRLPVPKEVNRKKNDETNAASLTPLGS) are disordered. Residues 44–54 (TNAASLTPLGS) show a composition bias toward polar residues. Phosphoserine is present on S59.

As to quaternary structure, interacts with the latency-associated peptides (LAP) of TGFB1 and TGFB2; the interaction results in a decrease in TGFB autoinduction. Interacts with FLNA. Phosphorylated on Ser-59. Phosphorylation decreases stability and activity. As to expression, expressed in lung (at protein level).

Its subcellular location is the cytoplasm. In terms of biological role, may have roles in neural function. Ectopic expression augments motility of gliomas. Also promotes axonal regeneration. May also have functions in cellular differentiation. Induces differentiation of fibroblast into myofibroblast and myofibroblast ameboid migration. Increases retinoic-acid regulation of lipid-droplet biogenesis. Down-regulates the expression of TGFB1 and TGFB2 but not of TGFB3. May play a role in the regulation of alveolar generation. The chain is Neuronal regeneration-related protein (NREP) from Homo sapiens (Human).